The primary structure comprises 350 residues: MLISQRPTLSEETVADNRSRFVIEPLEPGFGYTLGNSLRRTLLSSIPGAAVTSIRIDGVLHEFTTVPGVKEDVTDIILNLKSLVVSSEEDEPVTMYLRKQGPGEVTAGDIVPPAGVTVHNPEMHIATLNDKGKLEVELVVERGRGYVPAVQNKASGAEIGRIPVDSIYSPVLKVTYKVEATRVEQRTDFDKLILDVETKNSITPRDALASAGKTLVELFGLARELNVEAEGIEIGPSPAEADHIASFALPIDDLDLTVRSYNCLKREGVHTVGELVARTESDLLDIRNFGQKSIDEVKIKLHQLGLSLKDSPATFDPSEVAGYDAATGTWNSDAGYDLEDNQDYAETEQL.

Positions 1–226 (MLISQRPTLS…ELFGLARELN (226 aa)) are alpha N-terminal domain (alpha-NTD). Residues 241–350 (ADHIASFALP…NQDYAETEQL (110 aa)) form an alpha C-terminal domain (alpha-CTD) region. Residues 326 to 350 (ATGTWNSDAGYDLEDNQDYAETEQL) are disordered. Positions 336–350 (YDLEDNQDYAETEQL) are enriched in acidic residues.

The protein belongs to the RNA polymerase alpha chain family. As to quaternary structure, homodimer. The RNAP catalytic core consists of 2 alpha, 1 beta, 1 beta' and 1 omega subunit. When a sigma factor is associated with the core the holoenzyme is formed, which can initiate transcription.

The catalysed reaction is RNA(n) + a ribonucleoside 5'-triphosphate = RNA(n+1) + diphosphate. Functionally, DNA-dependent RNA polymerase catalyzes the transcription of DNA into RNA using the four ribonucleoside triphosphates as substrates. The polypeptide is DNA-directed RNA polymerase subunit alpha (Mycobacterium sp. (strain JLS)).